We begin with the raw amino-acid sequence, 193 residues long: Acyl carrier protein phosphodiesterase (193 aa).

Belongs to the AcpH family.

It catalyses the reaction holo-[ACP] + H2O = apo-[ACP] + (R)-4'-phosphopantetheine + H(+). Its function is as follows. Converts holo-ACP to apo-ACP by hydrolytic cleavage of the phosphopantetheine prosthetic group from ACP. The chain is Acyl carrier protein phosphodiesterase from Klebsiella pneumoniae (strain 342).